Here is a 72-residue protein sequence, read N- to C-terminus: MKADIHPNYPEVAVTCSCGNKFETRSTFGKALAIDVCNECHPFYTGKQKTLDTGGRVQKFADRFGAFGAKKA.

Residues Cys16, Cys18, Cys37, and Cys40 each coordinate Zn(2+).

Belongs to the bacterial ribosomal protein bL31 family. Type A subfamily. In terms of assembly, part of the 50S ribosomal subunit. Zn(2+) is required as a cofactor.

Its function is as follows. Binds the 23S rRNA. This Pseudomonas fluorescens (strain Pf0-1) protein is Large ribosomal subunit protein bL31.